The sequence spans 912 residues: Protein translocase subunit SecA (912 aa).

ATP-binding positions include Q87, 105-109 (GEGKT), and D508. The tract at residues 869-912 (EQMQGGNAPVPVSQVTRDEPKVGRNDPCPCGSGKKYKHCHGQLS) is disordered. Positions 896, 898, 907, and 908 each coordinate Zn(2+). A compositionally biased stretch (basic residues) spans 902–912 (KKYKHCHGQLS).

It belongs to the SecA family. As to quaternary structure, monomer and homodimer. Part of the essential Sec protein translocation apparatus which comprises SecA, SecYEG and auxiliary proteins SecDF-YajC and YidC. Zn(2+) serves as cofactor.

The protein localises to the cell inner membrane. The protein resides in the cytoplasm. It catalyses the reaction ATP + H2O + cellular proteinSide 1 = ADP + phosphate + cellular proteinSide 2.. Functionally, part of the Sec protein translocase complex. Interacts with the SecYEG preprotein conducting channel. Has a central role in coupling the hydrolysis of ATP to the transfer of proteins into and across the cell membrane, serving both as a receptor for the preprotein-SecB complex and as an ATP-driven molecular motor driving the stepwise translocation of polypeptide chains across the membrane. This chain is Protein translocase subunit SecA, found in Xanthomonas axonopodis pv. citri (strain 306).